A 265-amino-acid polypeptide reads, in one-letter code: MTESLAAVVLGIVEGATEFLPVSSTGHLILVGHLIGFTGEKADSFDVIIQLGAILAVVCLYWRRFWWLVSPKPHHAFSGIRGLWMLFLTSLPAGLIGLVARKSIKAYLFNPWSVALALSVGAVMIFLVEQRKTRDRYYSLDEMTPGLALGIGCFQCLSLWPGFSRSAATIMGGMLLGAKRSLAAEYSFIGAVPLMFAATLYDFYKSAHLFSADDLGVLGIGFVVSFVSALIAVKAFIVLVQRITLRPFAWYRLALAAAVFFFWPK.

8 helical membrane passes run 19-39, 42-62, 80-100, 108-128, 143-163, 181-201, 220-240, and 243-263; these read FLPV…GFTG, ADSF…CLYW, IRGL…GLVA, LFNP…IFLV, MTPG…WPGF, SLAA…ATLY, IGFV…IVLV, and ITLR…FFFW.

Belongs to the UppP family.

Its subcellular location is the cell inner membrane. It carries out the reaction di-trans,octa-cis-undecaprenyl diphosphate + H2O = di-trans,octa-cis-undecaprenyl phosphate + phosphate + H(+). In terms of biological role, catalyzes the dephosphorylation of undecaprenyl diphosphate (UPP). Confers resistance to bacitracin. The chain is Undecaprenyl-diphosphatase from Solidesulfovibrio magneticus (strain ATCC 700980 / DSM 13731 / RS-1) (Desulfovibrio magneticus).